We begin with the raw amino-acid sequence, 631 residues long: Chaperone protein DnaK (631 aa).

Residue Thr-197 is modified to Phosphothreonine; by autocatalysis. Positions 600 to 631 (KKENPQAADAQQGNTANAGKKKDDDVIDAEVE) are disordered.

This sequence belongs to the heat shock protein 70 family.

Functionally, acts as a chaperone. This chain is Chaperone protein DnaK, found in Wolinella succinogenes (strain ATCC 29543 / DSM 1740 / CCUG 13145 / JCM 31913 / LMG 7466 / NCTC 11488 / FDC 602W) (Vibrio succinogenes).